Here is a 428-residue protein sequence, read N- to C-terminus: Adenylosuccinate synthetase (428 aa).

Residues 12–18 (GDEGKGK) and 40–42 (GHT) each bind GTP. The Proton acceptor role is filled by Asp-13. The Mg(2+) site is built by Asp-13 and Gly-40. IMP is bound by residues 13 to 16 (DEGK), 38 to 41 (NAGH), Thr-130, Arg-144, Gln-225, Thr-240, and Arg-304. His-41 serves as the catalytic Proton donor. A substrate-binding site is contributed by 300 to 306 (VTTGRSR). Residues Arg-306, 332-334 (KID), and 414-416 (GVG) contribute to the GTP site.

This sequence belongs to the adenylosuccinate synthetase family. As to quaternary structure, homodimer. Mg(2+) serves as cofactor.

It localises to the cytoplasm. It carries out the reaction IMP + L-aspartate + GTP = N(6)-(1,2-dicarboxyethyl)-AMP + GDP + phosphate + 2 H(+). The protein operates within purine metabolism; AMP biosynthesis via de novo pathway; AMP from IMP: step 1/2. Its function is as follows. Plays an important role in the de novo pathway of purine nucleotide biosynthesis. Catalyzes the first committed step in the biosynthesis of AMP from IMP. This is Adenylosuccinate synthetase from Clostridium botulinum (strain Eklund 17B / Type B).